The sequence spans 152 residues: Nucleoside diphosphate kinase B (152 aa).

An interaction with AKAP13 region spans residues 1 to 66; that stretch reads MANLERTFIA…DRPFFPGLVK (66 aa). 6 residues coordinate ATP: Lys-12, Phe-60, Arg-88, Thr-94, Arg-105, and Asn-115. His-118 functions as the Pros-phosphohistidine intermediate in the catalytic mechanism.

The protein belongs to the NDK family. Hexamer of two different chains: An and B (A6, A5B, A4B2, A3B3, A2B4, AB5, B6). Interacts with CAPN8. Interacts with AKAP13. Interacts with ITGB1BP1 (via C-terminal domain region). Interacts with BCL2L10. Mg(2+) serves as cofactor.

Its subcellular location is the cytoplasm. The protein localises to the cell projection. The protein resides in the lamellipodium. It localises to the ruffle. It is found in the nucleus. It catalyses the reaction a 2'-deoxyribonucleoside 5'-diphosphate + ATP = a 2'-deoxyribonucleoside 5'-triphosphate + ADP. The enzyme catalyses a ribonucleoside 5'-diphosphate + ATP = a ribonucleoside 5'-triphosphate + ADP. The catalysed reaction is ATP + protein L-histidine = ADP + protein N-phospho-L-histidine.. Major role in the synthesis of nucleoside triphosphates other than ATP. The ATP gamma phosphate is transferred to the NDP beta phosphate via a ping-pong mechanism, using a phosphorylated active-site intermediate. Negatively regulates Rho activity by interacting with AKAP13/LBC. Acts as a transcriptional activator of the MYC gene; binds DNA non-specifically. Binds to both single-stranded guanine- and cytosine-rich strands within the nuclease hypersensitive element (NHE) III(1) region of the MYC gene promoter. Does not bind to duplex NHE III(1). Has G-quadruplex (G4) DNA-binding activity, which is independent of its nucleotide-binding and kinase activity. Binds both folded and unfolded G4 with similar low nanomolar affinities. Stabilizes folded G4s regardless of whether they are prefolded or not. Exhibits histidine protein kinase activity. The protein is Nucleoside diphosphate kinase B (NME2) of Pongo abelii (Sumatran orangutan).